The primary structure comprises 326 residues: GMP reductase (326 aa).

C175 serves as the catalytic Thioimidate intermediate. Position 204–227 (204–227) interacts with NADP(+); the sequence is IIADGGIRTHGDIAKSVRFGATMV.

It belongs to the IMPDH/GMPR family. GuaC type 2 subfamily.

It carries out the reaction IMP + NH4(+) + NADP(+) = GMP + NADPH + 2 H(+). Functionally, catalyzes the irreversible NADPH-dependent deamination of GMP to IMP. It functions in the conversion of nucleobase, nucleoside and nucleotide derivatives of G to A nucleotides, and in maintaining the intracellular balance of A and G nucleotides. This chain is GMP reductase, found in Bacillus licheniformis (strain ATCC 14580 / DSM 13 / JCM 2505 / CCUG 7422 / NBRC 12200 / NCIMB 9375 / NCTC 10341 / NRRL NRS-1264 / Gibson 46).